Consider the following 623-residue polypeptide: Regulatory solute carrier protein family 1 member 1 (623 aa).

Composition is skewed to polar residues over residues Met-1 to Pro-16, Cys-83 to Pro-99, and Glu-133 to Gln-144. Disordered regions lie at residues Met-1–Ile-48, Arg-71–Pro-99, Ser-116–Asp-189, and Glu-433–Thr-493. Composition is skewed to basic and acidic residues over residues Ile-150–Tyr-159, Gln-170–Glu-180, and Leu-460–Val-473. Positions Asn-474–His-491 are enriched in polar residues. A UBA domain is found at Ile-577 to Lys-617.

In terms of assembly, interacts with YRDC. As to expression, renal outer cortex and outer medulla, small intestine and liver.

The protein localises to the cell membrane. It localises to the nucleus. Its subcellular location is the golgi apparatus. It is found in the trans-Golgi network. Functionally, mediates transcriptional and post-transcriptional regulation of SLC5A1. Inhibits a dynamin and PKC-dependent exocytotic pathway of SLC5A1. Also involved in transcriptional regulation of SLC22A2. Exhibits glucose-dependent, short-term inhibition of SLC5A1 and SLC22A2 by inhibiting the release of vesicles from the trans-Golgi network. In Sus scrofa (Pig), this protein is Regulatory solute carrier protein family 1 member 1 (RSC1A1).